The primary structure comprises 322 residues: Lymphatic vessel endothelial hyaluronic acid receptor 1 (322 aa).

The first 19 residues, 1-19, serve as a signal peptide directing secretion; that stretch reads MARCFSLVLLLTSIWTTRL. Residues 20 to 238 lie on the Extracellular side of the membrane; that stretch reads LVQGSLRAEE…EAAGFGGVPT (219 aa). The region spanning 40–130 is the Link domain; sequence GITLVSKKAN…SRQFAAYCYN (91 aa). A glycan (N-linked (GlcNAc...) asparagine) is linked at N53. Cystine bridges form between C61–C128 and C85–C106. N-linked (GlcNAc...) asparagine glycosylation occurs at N130. The helical transmembrane segment at 239–259 threads the bilayer; the sequence is ALLVLALLFFGAAAGLGFCYV. Residues 260–322 are Cytoplasmic-facing; that stretch reads KRYVKAFPFT…TTVRCLEAEV (63 aa). Residues 279-309 show a composition bias toward basic and acidic residues; sequence ETKVVKEEKANDSNPNEESKKTDKNPEESKS. The tract at residues 279–322 is disordered; sequence ETKVVKEEKANDSNPNEESKKTDKNPEESKSPSKTTVRCLEAEV.

Homodimer; disulfide-linked. Interacts with PDGFB and IGFBP3. Forms a transient ternary complex with PDGFB and PDGFRB in TGN. O-glycosylated. Mainly expressed in endothelial cells lining lymphatic vessels.

Its subcellular location is the cell membrane. Its function is as follows. Ligand-specific transporter trafficking between intracellular organelles (TGN) and the plasma membrane. Plays a role in autocrine regulation of cell growth mediated by growth regulators containing cell surface retention sequence binding (CRS). May act as a hyaluronan (HA) transporter, either mediating its uptake for catabolism within lymphatic endothelial cells themselves, or its transport into the lumen of afferent lymphatic vessels for subsequent re-uptake and degradation in lymph nodes. Binds to pericelluar hyaluronan matrices deposited on the surface of leukocytes and facilitates cell adhesion and migration through lymphatic endothelium. This is Lymphatic vessel endothelial hyaluronic acid receptor 1 (LYVE1) from Homo sapiens (Human).